Consider the following 254-residue polypeptide: Phosphoglycerate mutase 1 (254 aa).

Substrate is bound by residues 10-17 (RHGESAWN) and 23-24 (SG). Histidine 11 acts as the Tele-phosphohistidine intermediate in catalysis. Phosphoserine is present on residues serine 14 and serine 23. Tyrosine 26 carries the phosphotyrosine modification. Phosphoserine is present on serine 31. Substrate is bound by residues arginine 62, 89–92 (ERHY), and lysine 100. Glutamate 89 acts as the Proton donor/acceptor in catalysis. Lysine 106 carries the N6-acetyllysine modification. A substrate-binding site is contributed by 116 to 117 (RR). Serine 118 carries the post-translational modification Phosphoserine. 187–188 (GN) is a binding site for substrate. Position 251 is an N6-acetyllysine; alternate (lysine 251). The residue at position 251 (lysine 251) is an N6-succinyllysine; alternate. Lysine 253 and lysine 254 each carry N6-acetyllysine.

Belongs to the phosphoglycerate mutase family. BPG-dependent PGAM subfamily. Homodimer. Acetylated at Lys-253, Lys-253 and Lys-254 under high glucose condition. Acetylation increases catalytic activity. Under glucose restriction SIRT1 levels dramatically increase and it deacetylates the enzyme. As to expression, expressed in the liver and brain. Not found in the muscle.

The catalysed reaction is (2R)-2-phosphoglycerate = (2R)-3-phosphoglycerate. It carries out the reaction (2R)-3-phospho-glyceroyl phosphate = (2R)-2,3-bisphosphoglycerate + H(+). In terms of biological role, catalyzes the interconversion of 2-phosphoglycerate and 3-phosphoglyceratea crucial step in glycolysis, by using 2,3-bisphosphoglycerate. Also catalyzes the interconversion of (2R)-2,3-bisphosphoglycerate and (2R)-3-phospho-glyceroyl phosphate. The protein is Phosphoglycerate mutase 1 of Homo sapiens (Human).